A 356-amino-acid chain; its full sequence is Homoserine O-acetyltransferase (356 aa).

The region spanning 49-337 (VLICHALTGS…KSTHGHDAFL (289 aa)) is the AB hydrolase-1 domain. Serine 143 acts as the Nucleophile in catalysis. Position 212 (arginine 212) interacts with substrate. Active-site residues include aspartate 304 and histidine 333. Aspartate 334 is a binding site for substrate.

This sequence belongs to the AB hydrolase superfamily. MetX family. In terms of assembly, homodimer.

The protein resides in the cytoplasm. The catalysed reaction is L-homoserine + acetyl-CoA = O-acetyl-L-homoserine + CoA. It participates in amino-acid biosynthesis; L-methionine biosynthesis via de novo pathway; O-acetyl-L-homoserine from L-homoserine: step 1/1. Transfers an acetyl group from acetyl-CoA to L-homoserine, forming acetyl-L-homoserine. The sequence is that of Homoserine O-acetyltransferase from Nostoc punctiforme (strain ATCC 29133 / PCC 73102).